The chain runs to 238 residues: Envelope glycoprotein G (238 aa).

A signal peptide spans 1-24 (MSQGAMRAVVPIIPFLLVLVGVSG). The Virion surface portion of the chain corresponds to 25 to 189 (VPTNVSSTTQ…SFLTASPALD (165 aa)). Asparagine 28 and asparagine 49 each carry an N-linked (GlcNAc...) asparagine; by host glycan. 2 stretches are compositionally biased toward polar residues: residues 28-42 (NVSS…TTGR) and 49-68 (NMTQ…TTPD). The disordered stretch occupies residues 28-171 (NVSSTTQPQL…LTSKGRPLVP (144 aa)). The segment covering 78 to 88 (LEEEEEEEGAG) has biased composition (acidic residues). A compositionally biased stretch (basic and acidic residues) spans 89 to 100 (DGEHLEGGDGTR). Residues 190-210 (TLFVVSTVIHTLSFLCIGAMA) traverse the membrane as a helical segment. Over 211–238 (THLCGGWSRRGRRTHPSVRYVCLPSERG) the chain is Intravirion.

The protein belongs to the alphaherpesvirinae glycoprotein G family.

It localises to the virion membrane. In terms of biological role, chemokine-binding protein that inhibits neutrophils' chemotaxis. This is Envelope glycoprotein G (gG) from Human herpesvirus 1 (strain 17) (HHV-1).